Consider the following 93-residue polypeptide: Protein BOLA2 (93 aa).

Cysteine 29 carries the post-translational modification S-glutathionyl cysteine; transient; alternate. Positions 72–93 are disordered; the sequence is KAQTPQQWKPPSQDSATLTKDA.

It belongs to the bolA/yrbA family. As to quaternary structure, homodimer. Interacts in vitro with GRXS14, GRXS15, GRXS16 and GRXS17, but not with GRXC5. Interacts in vivo only with GRXS17. Can be either glutathionylated or forming covalent homodimers, depending on the oxidation state.

Its subcellular location is the cytoplasm. The protein localises to the nucleus. May act either alone or in interaction with glutaredoxin as a redox-regulated transcriptional regulator, or as a factor regulating Fe-S cluster biogenesis. The GRXS17-BOLA2 heterodimer binds a labile, oxygen sensitive iron-sulfur cluster. This is Protein BOLA2 from Arabidopsis thaliana (Mouse-ear cress).